We begin with the raw amino-acid sequence, 146 residues long: Large ribosomal subunit protein uL11 (146 aa).

The protein belongs to the universal ribosomal protein uL11 family. In terms of assembly, part of the ribosomal stalk of the 50S ribosomal subunit. Interacts with L10 and the large rRNA to form the base of the stalk. L10 forms an elongated spine to which L12 dimers bind in a sequential fashion forming a multimeric L10(L12)X complex. Post-translationally, one or more lysine residues are methylated.

Functionally, forms part of the ribosomal stalk which helps the ribosome interact with GTP-bound translation factors. The polypeptide is Large ribosomal subunit protein uL11 (Treponema pallidum subsp. pallidum (strain SS14)).